Here is a 132-residue protein sequence, read N- to C-terminus: UPF0292 protein PH1700 (132 aa).

Residues 20 to 100 (EGAIIVEGAR…KVDTETRREL (81 aa)) form the Toprim domain. Residues Glu26, Asp69, and Asp71 each coordinate Mg(2+).

The protein belongs to the UPF0292 family. Mg(2+) serves as cofactor.

The sequence is that of UPF0292 protein PH1700 from Pyrococcus horikoshii (strain ATCC 700860 / DSM 12428 / JCM 9974 / NBRC 100139 / OT-3).